The following is a 196-amino-acid chain: Imidazoleglycerol-phosphate dehydratase (196 aa).

Belongs to the imidazoleglycerol-phosphate dehydratase family.

The protein localises to the cytoplasm. It carries out the reaction D-erythro-1-(imidazol-4-yl)glycerol 3-phosphate = 3-(imidazol-4-yl)-2-oxopropyl phosphate + H2O. Its pathway is amino-acid biosynthesis; L-histidine biosynthesis; L-histidine from 5-phospho-alpha-D-ribose 1-diphosphate: step 6/9. In Chlorobium chlorochromatii (strain CaD3), this protein is Imidazoleglycerol-phosphate dehydratase.